A 483-amino-acid polypeptide reads, in one-letter code: Regulatory protein ViaA (483 aa).

It belongs to the ViaA family. In terms of assembly, homodimer. Interacts with RavA.

It localises to the cytoplasm. Component of the RavA-ViaA chaperone complex, which may act on the membrane to optimize the function of some of the respiratory chains. ViaA stimulates the ATPase activity of RavA. In Salmonella typhi, this protein is Regulatory protein ViaA.